A 96-amino-acid polypeptide reads, in one-letter code: Large ribosomal subunit protein bL28 (96 aa).

Belongs to the bacterial ribosomal protein bL28 family.

This is Large ribosomal subunit protein bL28 from Agrobacterium fabrum (strain C58 / ATCC 33970) (Agrobacterium tumefaciens (strain C58)).